The following is a 675-amino-acid chain: Acyl-coenzyme A oxidase 3, peroxisomal (675 aa).

Residues 1 to 34 (MSDNRALRRAHVLANHILQSNPPSSNPSLSRELC) constitute a peroxisome transit peptide. An FAD-binding site is contributed by 442–457 (AVGGQGVKTENLVGQL).

The protein belongs to the acyl-CoA oxidase family. FAD is required as a cofactor. Most abundant in flowers and senescing rosette leaves. Lower expression in hypocotyls, stems, young rosette leaves, cotyledons, cauline leaves and root tip of young seedlings.

It localises to the peroxisome. It carries out the reaction a 2,3-saturated acyl-CoA + O2 = a (2E)-enoyl-CoA + H2O2. The protein operates within lipid metabolism; peroxisomal fatty acid beta-oxidation. Catalyzes the desaturation of medium-chain acyl-CoAs to 2-trans-enoyl-CoAs. Active on C8:0- to C14:0-CoA with a maximal activity on C12:0-CoA. The protein is Acyl-coenzyme A oxidase 3, peroxisomal (ACX3) of Arabidopsis thaliana (Mouse-ear cress).